Reading from the N-terminus, the 199-residue chain is 5'-deoxynucleotidase Ent638_2835 (199 aa).

Substrate is bound by residues 18-19 and H33; that span reads RW. Residues 30 to 142 enclose the HD domain; that stretch reads VSEHSLQVAM…VKQADALCAY (113 aa). Residues H33, H68, and D69 each contribute to the a divalent metal cation site. Substrate is bound by residues D69, 77 to 80, and D137; that span reads DLPT. D137 provides a ligand contact to a divalent metal cation.

The protein belongs to the 5DNU family. In terms of assembly, homodimer. The cofactor is a divalent metal cation.

The protein resides in the cytoplasm. The enzyme catalyses a 2'-deoxyribonucleoside 5'-phosphate + H2O = a 2'-deoxyribonucleoside + phosphate. Catalyzes the strictly specific dephosphorylation of 2'-deoxyribonucleoside 5'-monophosphates. The sequence is that of 5'-deoxynucleotidase Ent638_2835 from Enterobacter sp. (strain 638).